Reading from the N-terminus, the 1335-residue chain is Probable serine/threonine-protein kinase ndrC (1335 aa).

Disordered regions lie at residues 1-70, 85-158, 276-447, and 462-603; these read MSRK…KKGS, VDTH…LIPS, LPPP…SPLN, and TTTT…NNNK. Over residues 8 to 17 the composition is skewed to polar residues; it reads NRSSSSNSIE. Low complexity predominate over residues 27–41; sequence SNISNSSNINCNNSS. Over residues 55 to 70 the composition is skewed to basic residues; sequence RSKHSSPIHSLKKKGS. Over residues 89–117 the composition is skewed to low complexity; that stretch reads SSSNSNNNSSSNNNNNNNNHNINSSSESS. Over residues 118-132 the composition is skewed to polar residues; the sequence is TPTTPRSSFTPQVTM. The segment covering 133–153 has biased composition (low complexity); that stretch reads NSNQSSGNNSPQLSSRSSSQS. Positions 276-288 are enriched in pro residues; that stretch reads LPPPSQQQLPPPQ. Composition is skewed to low complexity over residues 289 to 331, 345 to 368, 382 to 396, 412 to 424, 437 to 447, and 462 to 484; these read SHQQ…TPQS, NQQQ…SPNK, SPSP…SPSS, PTPL…SPSS, PSSFSGGSPLN, and TTTT…TTIS. The span at 485–497 shows a compositional bias: polar residues; sequence NPNYTQNLPTTPL. Positions 498–507 are enriched in low complexity; sequence SNSSSNNNNN. The segment covering 508-528 has biased composition (polar residues); sequence GSFITLQDTTNNKSIINNNRE. Low complexity predominate over residues 540 to 566; that stretch reads SSGSSNTTSSTTNTTTPSSSSLTTSSG. A compositionally biased stretch (basic and acidic residues) spans 567–581; the sequence is KESRDRDSKDKEKDL. A compositionally biased stretch (low complexity) spans 586–602; it reads NNNNNNNNNNNNNNNNN. A coiled-coil region spans residues 586-613; sequence NNNNNNNNNNNNNNNNNKVEKEKENYCK. A Protein kinase domain is found at 718–1019; sequence FKILTQIGKG…KQDFKNHPFF (302 aa). Residues 724-732 and K747 each bind ATP; that span reads IGKGGFGQV. The active-site Proton acceptor is D840. Residues 1020–1106 form the AGC-kinase C-terminal domain; that stretch reads KNHNWDEIVN…RKSSALSLSM (87 aa). The segment covering 1239–1284 has biased composition (low complexity); the sequence is SQSQPSLANQLQSSSSSPSPSLQSQSQSPSLQSSSKSTPNLSSSLL. The interval 1239-1313 is disordered; that stretch reads SQSQPSLANQ…IKKENESEEI (75 aa). Over residues 1287 to 1313 the composition is skewed to basic and acidic residues; the sequence is PVKEELEYKNQTENEVEIKKENESEEI. Residues 1289-1325 adopt a coiled-coil conformation; it reads KEELEYKNQTENEVEIKKENESEEIQSLRDQLKEIII.

This sequence belongs to the protein kinase superfamily. AGC Ser/Thr protein kinase family.

It carries out the reaction L-seryl-[protein] + ATP = O-phospho-L-seryl-[protein] + ADP + H(+). The enzyme catalyses L-threonyl-[protein] + ATP = O-phospho-L-threonyl-[protein] + ADP + H(+). This chain is Probable serine/threonine-protein kinase ndrC (ndrC), found in Dictyostelium discoideum (Social amoeba).